The sequence spans 285 residues: Shikimate dehydrogenase (NADP(+)) (285 aa).

Residues 21–23 (SRS) and T68 each bind shikimate. The active-site Proton acceptor is the K72. An NADP(+)-binding site is contributed by E83. Shikimate-binding residues include N92 and D107. Residues 132–136 (GAGGS), 156–161 (NRTMER), and L221 each bind NADP(+). Residue Y223 participates in shikimate binding. G244 serves as a coordination point for NADP(+).

It belongs to the shikimate dehydrogenase family. Homodimer.

It catalyses the reaction shikimate + NADP(+) = 3-dehydroshikimate + NADPH + H(+). It participates in metabolic intermediate biosynthesis; chorismate biosynthesis; chorismate from D-erythrose 4-phosphate and phosphoenolpyruvate: step 4/7. Involved in the biosynthesis of the chorismate, which leads to the biosynthesis of aromatic amino acids. Catalyzes the reversible NADPH linked reduction of 3-dehydroshikimate (DHSA) to yield shikimate (SA). In Nitrobacter hamburgensis (strain DSM 10229 / NCIMB 13809 / X14), this protein is Shikimate dehydrogenase (NADP(+)).